A 271-amino-acid chain; its full sequence is Formamidopyrimidine-DNA glycosylase (271 aa).

The active-site Schiff-base intermediate with DNA is Pro2. The active-site Proton donor is the Glu3. Residue Lys57 is the Proton donor; for beta-elimination activity of the active site. DNA-binding residues include His90, Arg109, and Lys151. The segment at 236–270 adopts an FPG-type zinc-finger fold; the sequence is HVYGRGGETCTQCGHLLSEIKLGQRATVFCSLCQK. Arg260 (proton donor; for delta-elimination activity) is an active-site residue.

This sequence belongs to the FPG family. As to quaternary structure, monomer. Requires Zn(2+) as cofactor.

The catalysed reaction is Hydrolysis of DNA containing ring-opened 7-methylguanine residues, releasing 2,6-diamino-4-hydroxy-5-(N-methyl)formamidopyrimidine.. It catalyses the reaction 2'-deoxyribonucleotide-(2'-deoxyribose 5'-phosphate)-2'-deoxyribonucleotide-DNA = a 3'-end 2'-deoxyribonucleotide-(2,3-dehydro-2,3-deoxyribose 5'-phosphate)-DNA + a 5'-end 5'-phospho-2'-deoxyribonucleoside-DNA + H(+). Involved in base excision repair of DNA damaged by oxidation or by mutagenic agents. Acts as a DNA glycosylase that recognizes and removes damaged bases. Has a preference for oxidized purines, such as 7,8-dihydro-8-oxoguanine (8-oxoG). Has AP (apurinic/apyrimidinic) lyase activity and introduces nicks in the DNA strand. Cleaves the DNA backbone by beta-delta elimination to generate a single-strand break at the site of the removed base with both 3'- and 5'-phosphates. The sequence is that of Formamidopyrimidine-DNA glycosylase from Shewanella halifaxensis (strain HAW-EB4).